Here is a 207-residue protein sequence, read N- to C-terminus: Superoxide dismutase [Mn] (207 aa).

His-28, His-76, Asp-160, and His-164 together coordinate Mn(2+).

The protein belongs to the iron/manganese superoxide dismutase family. The cofactor is Mn(2+).

It carries out the reaction 2 superoxide + 2 H(+) = H2O2 + O2. Functionally, destroys superoxide anion radicals which are normally produced within the cells and which are toxic to biological systems. The sequence is that of Superoxide dismutase [Mn] (sodA) from Mycobacterium intracellulare (strain ATCC 13950 / DSM 43223 / JCM 6384 / NCTC 13025 / 3600).